Consider the following 206-residue polypeptide: MGISRDSRHKRSATGAKRAQFRKKRKFELGRQPANTKIGPKRIHSVRTRGGNQKFRALRVETGNFSWGSEGVSRKTRIAGVVYHPSNNELVRTNTLTKSAVVQIDATPFRQWYENHYGATLGKKKGGAHAAHAAEVADAKRSRKVERKLAARSGAAAIESAVDSQFGSGRLYAVISSRPGQSGRCDGYILEGEELAFYLRRLTAKK.

Residues 1-37 (MGISRDSRHKRSATGAKRAQFRKKRKFELGRQPANTK) form a disordered region.

It belongs to the eukaryotic ribosomal protein eS8 family. As to quaternary structure, component of the small ribosomal subunit. Mature ribosomes consist of a small (40S) and a large (60S) subunit. The 40S subunit contains about 32 different proteins and 1 molecule of RNA (18S). The 60S subunit contains 45 different proteins and 3 molecules of RNA (25S, 5.8S and 5S).

Its subcellular location is the cytoplasm. In terms of biological role, component of the ribosome, a large ribonucleoprotein complex responsible for the synthesis of proteins in the cell. The small ribosomal subunit (SSU) binds messenger RNAs (mRNAs) and translates the encoded message by selecting cognate aminoacyl-transfer RNA (tRNA) molecules. The large subunit (LSU) contains the ribosomal catalytic site termed the peptidyl transferase center (PTC), which catalyzes the formation of peptide bonds, thereby polymerizing the amino acids delivered by tRNAs into a polypeptide chain. The nascent polypeptides leave the ribosome through a tunnel in the LSU and interact with protein factors that function in enzymatic processing, targeting, and the membrane insertion of nascent chains at the exit of the ribosomal tunnel. The protein is Small ribosomal subunit protein eS8 (RPS8A) of Candida albicans (strain SC5314 / ATCC MYA-2876) (Yeast).